The primary structure comprises 67 residues: Large ribosomal subunit protein uL29 (67 aa).

This sequence belongs to the universal ribosomal protein uL29 family.

The chain is Large ribosomal subunit protein uL29 from Polaromonas naphthalenivorans (strain CJ2).